A 178-amino-acid chain; its full sequence is Small ribosomal subunit protein uS5 (178 aa).

Positions 15–78 constitute an S5 DRBM domain; that stretch reads FEEKIIEIRR…SAAKRNIIEV (64 aa).

This sequence belongs to the universal ribosomal protein uS5 family. Part of the 30S ribosomal subunit. Contacts proteins S4 and S8.

Functionally, with S4 and S12 plays an important role in translational accuracy. Located at the back of the 30S subunit body where it stabilizes the conformation of the head with respect to the body. This is Small ribosomal subunit protein uS5 from Thermotoga sp. (strain RQ2).